The chain runs to 1461 residues: Regulation of nuclear pre-mRNA domain-containing protein 2 (1461 aa).

A2 is modified (N-acetylalanine). S16 carries the post-translational modification Phosphoserine. The 131-residue stretch at 19–149 folds into the CID domain; sequence SAGALESSLD…ALREALSTTF (131 aa). Disordered regions lie at residues 311–438 and 469–504; these read STLP…TSLS and NTGV…TTSH. Residues 352-368 are compositionally biased toward basic and acidic residues; that stretch reads ESEKSATPEPVTDNRDV. S356 is modified (phosphoserine). Phosphothreonine is present on T358. Positions 369-378 are enriched in acidic residues; the sequence is EDMELSDVED. S374 is subject to Phosphoserine. The span at 379-394 shows a compositional bias: basic and acidic residues; that stretch reads DGSKIIVEDRKEKPAE. Over residues 397–416 the composition is skewed to polar residues; it reads AVSTSVPTKPTENISKASSC. Composition is skewed to low complexity over residues 417 to 426 and 473 to 491; these read TPVPVTMTAT and SPAS…NLTS. Phosphoserine is present on residues S473, S476, and S479. T482 carries the post-translational modification Phosphothreonine. Residue S485 is modified to Phosphoserine. Phosphothreonine is present on T517. Residues 547-623 form a disordered region; it reads TGNPVPASEA…SPGLPSTTFK (77 aa). The span at 553-566 shows a compositional bias: low complexity; the sequence is ASEAASQSTSASPA. A Phosphoserine modification is found at S564. Positions 567–583 are enriched in polar residues; it reads NTTVSTIKGRNLPSSAQ. Position 593 is a phosphoserine (S593). The span at 593–614 shows a compositional bias: low complexity; sequence SPNSSTSEVSSTSASKASIGQS. T598 bears the Phosphothreonine mark. S614, S663, S665, and S716 each carry phosphoserine. Disordered stretches follow at residues 696–849, 900–997, 1016–1102, 1132–1312, and 1340–1461; these read GSSA…MMNL, SENC…EKVL, ASRK…SGEP, STSG…APPL, and FGVL…PPRY. A Phosphothreonine modification is found at T723. The residue at position 730 (S730) is a Phosphoserine. At T732 the chain carries Phosphothreonine. Residues 742–752 are compositionally biased toward polar residues; that stretch reads PTSSSVDTMSL. Residues S758 and S762 each carry the phosphoserine modification. Over residues 758–768 the composition is skewed to low complexity; it reads SPGSSTPSSTR. A Phosphothreonine modification is found at T763. Residues S769, S817, S826, S900, S909, S928, S965, and S976 each carry the phosphoserine modification. Over residues 927 to 954 the composition is skewed to polar residues; the sequence is RSPSPSKNDSFFTPDSNHNSLSQSTTGH. A compositionally biased stretch (polar residues) spans 1031-1055; it reads SKGTPSDGVSLSNLTQPSLTATDQQ. Phosphoserine occurs at positions 1068 and 1099. The segment covering 1141 to 1150 has biased composition (low complexity); it reads GPSSASELAS. A compositionally biased stretch (gly residues) spans 1151-1160; sequence LGGGGSGGLT. Residues 1174–1189 show a composition bias toward polar residues; it reads FQESVGSFRSNSFNST. Composition is skewed to pro residues over residues 1267–1277 and 1290–1299; these read FPTPPPPPPPG and STPPPPPPPV. Position 1366 is an asymmetric dimethylarginine (R1366). The segment covering 1382 to 1391 has biased composition (gly residues); it reads PHGGGGGGGS. Positions 1417–1434 are enriched in basic and acidic residues; sequence PRPDFRPREPFLSRDPFH. R1424 and R1430 each carry asymmetric dimethylarginine.

Associates with the RNA polymerase II complex.

The polypeptide is Regulation of nuclear pre-mRNA domain-containing protein 2 (RPRD2) (Homo sapiens (Human)).